Reading from the N-terminus, the 194-residue chain is Probable WRKY transcription factor 51 (194 aa).

Positions 58 to 97 are disordered; the sequence is SSETFTGESGGSGSATTLSKKESTNRGSKESDQTKETGHR. Positions 76–96 are enriched in basic and acidic residues; sequence SKKESTNRGSKESDQTKETGH. Positions 104-169 form a DNA-binding region, WRKY; that stretch reads SKIDVMDDGF…YEGVHNHESL (66 aa).

It belongs to the WRKY group II-c family. As to quaternary structure, interacts with CAMBP25/VQ15.

It is found in the nucleus. Functionally, transcription factor. Interacts specifically with the W box (5'-(T)TGAC[CT]-3'), a frequently occurring elicitor-responsive cis-acting element. Involved in defense responses. May act as positive regulator of salicylic acid (SA)-mediated signaling and negative regulator of jasmonic acid (JA)-mediated signaling. In Arabidopsis thaliana (Mouse-ear cress), this protein is Probable WRKY transcription factor 51 (WRKY51).